Here is a 490-residue protein sequence, read N- to C-terminus: Cytochrome P450 2C55 (490 aa).

Position 435 (cysteine 435) interacts with heme.

This sequence belongs to the cytochrome P450 family. The cofactor is heme.

The protein resides in the endoplasmic reticulum membrane. Its subcellular location is the microsome membrane. The catalysed reaction is an organic molecule + reduced [NADPH--hemoprotein reductase] + O2 = an alcohol + oxidized [NADPH--hemoprotein reductase] + H2O + H(+). Its function is as follows. Metabolizes arachidonic acid mainly to 19-hydroxyeicosatetraenoic acid (HETE). The chain is Cytochrome P450 2C55 (Cyp2c55) from Rattus norvegicus (Rat).